A 118-amino-acid chain; its full sequence is Large ribosomal subunit protein bL20 (118 aa).

The protein belongs to the bacterial ribosomal protein bL20 family.

In terms of biological role, binds directly to 23S ribosomal RNA and is necessary for the in vitro assembly process of the 50S ribosomal subunit. It is not involved in the protein synthesizing functions of that subunit. This chain is Large ribosomal subunit protein bL20, found in Yersinia enterocolitica serotype O:8 / biotype 1B (strain NCTC 13174 / 8081).